The following is a 465-amino-acid chain: Ribulose bisphosphate carboxylase large chain (465 aa).

Lysine 4 carries the post-translational modification N6,N6,N6-trimethyllysine. The substrate site is built by asparagine 113 and threonine 163. Lysine 165 (proton acceptor) is an active-site residue. Residue lysine 167 participates in substrate binding. Positions 191, 193, and 194 each coordinate Mg(2+). Lysine 191 carries the post-translational modification N6-carboxylysine. The active-site Proton acceptor is histidine 284. 3 residues coordinate substrate: arginine 285, histidine 317, and serine 369.

Belongs to the RuBisCO large chain family. Type I subfamily. Heterohexadecamer of 8 large chains and 8 small chains; disulfide-linked. The disulfide link is formed within the large subunit homodimers. Mg(2+) is required as a cofactor. In terms of processing, the disulfide bond which can form in the large chain dimeric partners within the hexadecamer appears to be associated with oxidative stress and protein turnover.

It localises to the plastid. The protein resides in the chloroplast. The catalysed reaction is 2 (2R)-3-phosphoglycerate + 2 H(+) = D-ribulose 1,5-bisphosphate + CO2 + H2O. It carries out the reaction D-ribulose 1,5-bisphosphate + O2 = 2-phosphoglycolate + (2R)-3-phosphoglycerate + 2 H(+). In terms of biological role, ruBisCO catalyzes two reactions: the carboxylation of D-ribulose 1,5-bisphosphate, the primary event in carbon dioxide fixation, as well as the oxidative fragmentation of the pentose substrate in the photorespiration process. Both reactions occur simultaneously and in competition at the same active site. The sequence is that of Ribulose bisphosphate carboxylase large chain from Bursera inaguensis (Elaphrium inaguense).